Consider the following 309-residue polypeptide: 2-dehydro-3-deoxygluconokinase (309 aa).

Residues 28-32 (GDTLN), Tyr-88, 102-104 (YWR), and Arg-170 each bind substrate. ATP-binding positions include 168–170 (NYR), 228–233 (KRGADS), and 261–264 (AAGD). Asp-264 serves as a coordination point for substrate. The Proton acceptor role is filled by Asp-264.

The protein belongs to the carbohydrate kinase PfkB family.

It carries out the reaction 2-dehydro-3-deoxy-D-gluconate + ATP = 2-dehydro-3-deoxy-6-phospho-D-gluconate + ADP + H(+). It functions in the pathway carbohydrate acid metabolism; 2-dehydro-3-deoxy-D-gluconate degradation; D-glyceraldehyde 3-phosphate and pyruvate from 2-dehydro-3-deoxy-D-gluconate: step 1/2. In terms of biological role, catalyzes the phosphorylation of 2-keto-3-deoxygluconate (KDG) to produce 2-keto-3-deoxy-6-phosphogluconate (KDPG). The chain is 2-dehydro-3-deoxygluconokinase (kdgK) from Escherichia coli (strain K12).